The chain runs to 410 residues: Formyl-CoA:oxalate CoA-transferase (410 aa).

CoA contacts are provided by residues 18-19 (QS), 72-75 (LNTK), 96-98 (NFG), Arg-104, and 136-139 (KAYE). The active-site Nucleophile is Asp-168. A disordered region spans residues 221–245 (PLAEYPNEDFGDEVPRSGNASGGGQ). 243–245 (GGQ) contributes to the substrate binding site.

This sequence belongs to the CoA-transferase III family. Frc subfamily. In terms of assembly, homodimer.

It catalyses the reaction formyl-CoA + oxalate = oxalyl-CoA + formate. The protein operates within metabolic intermediate degradation; oxalate degradation; CO(2) and formate from oxalate: step 1/2. Functionally, involved in the catabolism of oxalate and in the adapatation to low pH via the induction of the oxalate-dependent acid tolerance response (ATR). Catalyzes the transfer of the CoA moiety from formyl-CoA to oxalate. This chain is Formyl-CoA:oxalate CoA-transferase, found in Streptomyces coelicolor (strain ATCC BAA-471 / A3(2) / M145).